A 549-amino-acid chain; its full sequence is Oxygen-dependent choline dehydrogenase (549 aa).

An FAD-binding site is contributed by 4–33 (DYVIVGSGSAGSAIAYRLSEDGRYSVIVIE). His465 serves as the catalytic Proton acceptor. Positions 528-549 (KTPLPRSNQEPWVNPRAAVSDR) are disordered.

Belongs to the GMC oxidoreductase family. It depends on FAD as a cofactor.

It carries out the reaction choline + A = betaine aldehyde + AH2. The catalysed reaction is betaine aldehyde + NAD(+) + H2O = glycine betaine + NADH + 2 H(+). The protein operates within amine and polyamine biosynthesis; betaine biosynthesis via choline pathway; betaine aldehyde from choline (cytochrome c reductase route): step 1/1. Its function is as follows. Involved in the biosynthesis of the osmoprotectant glycine betaine. Catalyzes the oxidation of choline to betaine aldehyde and betaine aldehyde to glycine betaine at the same rate. The protein is Oxygen-dependent choline dehydrogenase of Agrobacterium fabrum (strain C58 / ATCC 33970) (Agrobacterium tumefaciens (strain C58)).